The sequence spans 186 residues: Threonylcarbamoyl-AMP synthase (186 aa).

A YrdC-like domain is found at 1 to 186 (MADTWEAAHS…LNNQVFRDDA (186 aa)).

Belongs to the SUA5 family. TsaC subfamily.

It is found in the cytoplasm. The catalysed reaction is L-threonine + hydrogencarbonate + ATP = L-threonylcarbamoyladenylate + diphosphate + H2O. Functionally, required for the formation of a threonylcarbamoyl group on adenosine at position 37 (t(6)A37) in tRNAs that read codons beginning with adenine. Catalyzes the conversion of L-threonine, HCO(3)(-)/CO(2) and ATP to give threonylcarbamoyl-AMP (TC-AMP) as the acyladenylate intermediate, with the release of diphosphate. The polypeptide is Threonylcarbamoyl-AMP synthase (Idiomarina loihiensis (strain ATCC BAA-735 / DSM 15497 / L2-TR)).